The chain runs to 433 residues: Keratin, type I cytoskeletal 17 (433 aa).

Residues 1-24 (MTTTIRQFTSSSSIKGSSGLGGGS) are disordered. The segment at 1–83 (MTTTIRQFTS…GGVDGLLAGG (83 aa)) is head. 2 positions are modified to phosphoserine: serine 12 and serine 13. Residue lysine 15 forms a Glycyl lysine isopeptide (Lys-Gly) (interchain with G-Cter in SUMO1); alternate linkage. Lysine 15 participates in a covalent cross-link: Glycyl lysine isopeptide (Lys-Gly) (interchain with G-Cter in SUMO2); alternate. Serine 25, serine 32, serine 34, and serine 39 each carry phosphoserine. Residue serine 44 is modified to Phosphoserine; by RPS6KA1. Positions 84–120 (EKATMQNLNDRLASYLDKVRALEEANTELEVKIRDWY) are coil 1A. Residues 84 to 395 (EKATMQNLND…RLLEGEDAHL (312 aa)) enclose the IF rod domain. The residue at position 110 (threonine 110) is a Phosphothreonine. Positions 121–138 (QKQAPGPARDYSAYYHTI) are linker 1. The interval 139-230 (EDLKNKILVA…NHEEEMNALR (92 aa)) is coil 1B. Residues 231–250 (GQVGGEINVEMDAAPGVDLS) are linker 12. Residues 251 to 392 (RILSEMRDQY…TYRRLLEGED (142 aa)) are coil 2. Lysine 278 is covalently cross-linked (Glycyl lysine isopeptide (Lys-Gly) (interchain with G-Cter in SUMO2)). Residue threonine 279 is modified to Phosphothreonine. Phosphoserine is present on serine 323. The segment at 393–433 (AHLTQYKPKEPVTTRQVRTIVEEVQDGKVISSREQVHQTTR) is tail. Residues lysine 399, lysine 401, and lysine 420 each participate in a glycyl lysine isopeptide (Lys-Gly) (interchain with G-Cter in SUMO1); alternate cross-link. Glycyl lysine isopeptide (Lys-Gly) (interchain with G-Cter in SUMO2); alternate cross-links involve residues lysine 399, lysine 401, and lysine 420.

It belongs to the intermediate filament family. Heterodimer of a type I and a type II keratin. KRT17 associates with KRT6 isomers (KRT6A or KRT6B). Interacts with TRADD and SFN. Post-translationally, phosphorylation at Ser-44 occurs in a growth- and stress-dependent fashion in skin keratinocytes, it has no effect on filament organization. Expressed strongly in outer root sheath and medulla region of hair follicle and in the early differentiating epithelial cells (trichocytes) within the hair bulb region. Weak expression in the matrix cells of hair bulb. Also present in the sweat gland within the skin, vibrissae follicle, salivary gland, tooth and thymus.

It localises to the cytoplasm. Its function is as follows. Type I keratin involved in the formation and maintenance of various skin appendages, specifically in determining shape and orientation of hair. Required for the correct growth of hair follicles, in particular for the persistence of the anagen (growth) state. Modulates the function of TNF-alpha in the specific context of hair cycling. Regulates protein synthesis and epithelial cell growth through binding to the adapter protein SFN and by stimulating Akt/mTOR pathway. Involved in tissue repair. May be a marker of basal cell differentiation in complex epithelia and therefore indicative of a certain type of epithelial 'stem cells'. Acts as a promoter of epithelial proliferation by acting a regulator of immune response in skin: promotes Th1/Th17-dominated immune environment contributing to the development of basaloid skin tumors. May act as an autoantigen in the immunopathogenesis of psoriasis, with certain peptide regions being a major target for autoreactive T-cells and hence causing their proliferation. This Mus musculus (Mouse) protein is Keratin, type I cytoskeletal 17 (Krt17).